We begin with the raw amino-acid sequence, 370 residues long: 2-aminoethylphosphonate--pyruvate transaminase (370 aa).

K194 is modified (N6-(pyridoxal phosphate)lysine).

The protein belongs to the class-V pyridoxal-phosphate-dependent aminotransferase family. PhnW subfamily. Homodimer. Pyridoxal 5'-phosphate is required as a cofactor.

The catalysed reaction is (2-aminoethyl)phosphonate + pyruvate = phosphonoacetaldehyde + L-alanine. Functionally, involved in phosphonate degradation. The chain is 2-aminoethylphosphonate--pyruvate transaminase from Paraburkholderia phymatum (strain DSM 17167 / CIP 108236 / LMG 21445 / STM815) (Burkholderia phymatum).